The primary structure comprises 1275 residues: Myosin-1 (1275 aa).

Positions 35 to 727 (VGVSDLTLLS…TLFAMEDMRD (693 aa)) constitute a Myosin motor domain. 128 to 135 (GESGAGKT) provides a ligand contact to ATP. Phosphoserine is present on Ser361. Positions 410 to 493 (TIGILDIYGF…PGLFAALNDS (84 aa)) are actin-binding. IQ domains follow at residues 731–751 (HNMAARIQRAWRRYVKRKEDA) and 752–777 (ARLIQNAWKVKKHGNQFEQLRDYGNG). The TH1 domain maps to 785–974 (RRRMSMLGSR…KSGTVSVRPG (190 aa)). 4 disordered regions span residues 966–1064 (SGTV…LNNN), 1089–1128 (QNHNSNPTAPSRPAKKAAPAPPVKKTAPPPPPSLSAAKPK), 1183–1230 (SECP…GGLS), and 1251–1275 (IADALKKRSATRDSDDEEEDDDDDW). Residues 977–992 (PDSQNPKRPRATSSKV) are compositionally biased toward polar residues. Residues 1095-1106 (PTAPSRPAKKAA) are compositionally biased toward low complexity. A compositionally biased stretch (pro residues) spans 1107 to 1121 (PAPPVKKTAPPPPPS). Residues 1127-1187 (PKWPTFKANY…PTAYISECPP (61 aa)) enclose the SH3 domain. Over residues 1254-1263 (ALKKRSATRD) the composition is skewed to basic and acidic residues. A compositionally biased stretch (acidic residues) spans 1264–1275 (SDDEEEDDDDDW).

The protein belongs to the TRAFAC class myosin-kinesin ATPase superfamily. Myosin family. Post-translationally, phosphorylation of the TEDS site (Ser-361) is required for the polarization of the actin cytoskeleton. Phosphorylation probably activates the myosin-I ATPase activity.

The protein localises to the cytoplasm. The protein resides in the cytoskeleton. Its subcellular location is the actin patch. Type-I myosin implicated in the organization of the actin cytoskeleton. Required for proper actin cytoskeleton polarization. At the cell cortex, assembles in patch-like structures together with proteins from the actin-polymerizing machinery and promotes actin assembly. Functions as actin nucleation-promoting factor (NPF) for the Arp2/3 complex. The chain is Myosin-1 (MYO1) from Meyerozyma guilliermondii (strain ATCC 6260 / CBS 566 / DSM 6381 / JCM 1539 / NBRC 10279 / NRRL Y-324) (Yeast).